Consider the following 119-residue polypeptide: Large ribosomal subunit protein bL20 (119 aa).

It belongs to the bacterial ribosomal protein bL20 family.

Functionally, binds directly to 23S ribosomal RNA and is necessary for the in vitro assembly process of the 50S ribosomal subunit. It is not involved in the protein synthesizing functions of that subunit. This Clostridium tetani (strain Massachusetts / E88) protein is Large ribosomal subunit protein bL20.